Here is a 280-residue protein sequence, read N- to C-terminus: Pantothenate synthetase (280 aa).

30–37 (MGYLHEGH) is an ATP binding site. H37 functions as the Proton donor in the catalytic mechanism. A (R)-pantoate-binding site is contributed by Q61. A beta-alanine-binding site is contributed by Q61. 147–150 (GQKD) is an ATP binding site. (R)-pantoate is bound at residue Q153. ATP contacts are provided by residues V176 and 184–187 (MSSR).

It belongs to the pantothenate synthetase family. As to quaternary structure, homodimer.

Its subcellular location is the cytoplasm. It carries out the reaction (R)-pantoate + beta-alanine + ATP = (R)-pantothenate + AMP + diphosphate + H(+). The protein operates within cofactor biosynthesis; (R)-pantothenate biosynthesis; (R)-pantothenate from (R)-pantoate and beta-alanine: step 1/1. In terms of biological role, catalyzes the condensation of pantoate with beta-alanine in an ATP-dependent reaction via a pantoyl-adenylate intermediate. This chain is Pantothenate synthetase, found in Thermotoga neapolitana.